A 305-amino-acid polypeptide reads, in one-letter code: MVETEEFIAEAKAEIREAIGDANAVIALSGGVDSSVAATLAYEAVGDQLTPVYVDTGLMRKGETEEIRETFSFMESLRVIEAQERFFDRLAGVTDPEEKRHVIGEGFIDEFETVANDVGADYLVQGTIYPDRIESEGNIKSHHNVGGLPDIVDFEGIVEPVRDLYKDEVREVARALGLEEVISERMPFPGPGLAVRIVGEVTPEKAAVAREATHVVEEELEEYDPWQAFAAVLGKATGVKGDNRVHGWVVAVRSVESRDGMTARAQELDWSTLQRIQSRITGENENVARVVYDVTHKPPATIEYE.

The GMPS ATP-PPase domain occupies 2–185 (VETEEFIAEA…LGLEEVISER (184 aa)). 29–35 (SGGVDSS) contributes to the ATP binding site.

Heterodimer composed of a glutamine amidotransferase subunit (A) and a GMP-binding subunit (B).

It catalyses the reaction XMP + L-glutamine + ATP + H2O = GMP + L-glutamate + AMP + diphosphate + 2 H(+). The protein operates within purine metabolism; GMP biosynthesis; GMP from XMP (L-Gln route): step 1/1. Its function is as follows. Catalyzes the synthesis of GMP from XMP. In Halorubrum lacusprofundi (strain ATCC 49239 / DSM 5036 / JCM 8891 / ACAM 34), this protein is GMP synthase [glutamine-hydrolyzing] subunit B.